A 769-amino-acid chain; its full sequence is Serine protease HtrA-like (769 aa).

The span at 1-20 (MDIGKKHVIPKSQYRRKRRE) shows a compositional bias: basic residues. Residues 1–390 (MDIGKKHVIP…ATSKLNKGRA (390 aa)) are disordered. Basic and acidic residues-rich tracts occupy residues 21 to 64 (FFHN…ERFK) and 71 to 108 (LEQR…DVSK). The span at 126 to 137 (YEQNSEATLSTK) shows a compositional bias: polar residues. Residues 138 to 186 (STDKVESTEMRKLSSDKNKVGHEEQHVLSKPSEHDKETRIDSESSRTDS) are compositionally biased toward basic and acidic residues. The segment covering 247-262 (QQSQNEQTKTYTYGDS) has biased composition (polar residues). 2 stretches are compositionally biased toward basic and acidic residues: residues 264–296 (QNDK…HIVD) and 310–330 (KTDD…HKQN). The segment covering 331–347 (ADSSETVGYQSQSTASH) has biased composition (polar residues). Residues 348–364 (RSTEKRNISINDHDKLN) are compositionally biased toward basic and acidic residues. Over residues 365-390 (GQKTNTKTSANNNQKKATSKLNKGRA) the composition is skewed to polar residues. A helical membrane pass occupies residues 410-430 (LVILMGIIILIVILNAIFNNV). Residues H504, D534, and S619 each act as charge relay system in the active site. A PDZ domain is found at 680–733 (IASLNSFERQAVKLPGKVKNGVVVDQVDNNGLADQSGLKKGDVITELDGKLLED).

This sequence belongs to the peptidase S1C family.

Its subcellular location is the cell membrane. This chain is Serine protease HtrA-like, found in Staphylococcus aureus (strain USA300).